The primary structure comprises 238 residues: Orotate phosphoribosyltransferase (238 aa).

Lys-29 provides a ligand contact to 5-phospho-alpha-D-ribose 1-diphosphate. Residue 37–38 (FF) coordinates orotate. Residues 87–88 (YK), Arg-118, Lys-119, Lys-122, His-124, and 144–152 (DDVITAGTA) contribute to the 5-phospho-alpha-D-ribose 1-diphosphate site. Orotate is bound by residues Thr-148 and Arg-176.

The protein belongs to the purine/pyrimidine phosphoribosyltransferase family. PyrE subfamily. Homodimer.

It carries out the reaction orotidine 5'-phosphate + diphosphate = orotate + 5-phospho-alpha-D-ribose 1-diphosphate. The protein operates within pyrimidine metabolism; UMP biosynthesis via de novo pathway; UMP from orotate: step 1/2. Functionally, catalyzes the transfer of a ribosyl phosphate group from 5-phosphoribose 1-diphosphate to orotate, leading to the formation of orotidine monophosphate (OMP). The polypeptide is Orotate phosphoribosyltransferase (URA5) (Coccidioides immitis (strain RS) (Valley fever fungus)).